Consider the following 349-residue polypeptide: MSDLNYLYGAPLSKADFKTTAEDFMVDEDLGIEFTGSGEHVCLQVVKKGENTQYVAKLIAQRAGVSPRDVSYAGMKDRHGVCSQWFSVKVPIKKPIDFSDLNSESVFVVSQQRHERKLRTGCHKGNKFTITLRNVTDPLDILCRINAVRSGVPNYFGEQRFGRDGHNLVMAEKMFAGERIRDKKLRGIIISAARSHVFNQLVSLRVKEHGLAKTMHREVFMLSGSNAFFEDAISDENIARLASGDIMMSAPMVGKSEKGLTEQEKVWLGPYQSWCDGLGELGLKNERRMLRLIPQDFSVETIDESTLKLSFGLPKGCFATALLRELVDYTDASPRERKEKDSKDEDPIK.

Asp-77 functions as the Nucleophile in the catalytic mechanism. The TRUD domain maps to 151–309 (GVPNYFGEQR…ETIDESTLKL (159 aa)).

The protein belongs to the pseudouridine synthase TruD family.

It catalyses the reaction uridine(13) in tRNA = pseudouridine(13) in tRNA. In terms of biological role, responsible for synthesis of pseudouridine from uracil-13 in transfer RNAs. This is tRNA pseudouridine synthase D from Pseudoalteromonas translucida (strain TAC 125).